We begin with the raw amino-acid sequence, 453 residues long: 3-phosphoshikimate 1-carboxyvinyltransferase (453 aa).

The segment at 1-27 is disordered; that stretch reads MSHDSEPQPVTATPGGPLNGSLKPPGD. 3-phosphoshikimate is bound by residues K28, S29, and R33. K28 is a phosphoenolpyruvate binding site. Phosphoenolpyruvate is bound by residues G101 and R129. 3-phosphoshikimate is bound by residues S175, Q177, D330, and K357. Position 177 (Q177) interacts with phosphoenolpyruvate. Residue D330 is the Proton acceptor of the active site. R361 and R405 together coordinate phosphoenolpyruvate.

This sequence belongs to the EPSP synthase family. As to quaternary structure, monomer.

The protein localises to the cytoplasm. The catalysed reaction is 3-phosphoshikimate + phosphoenolpyruvate = 5-O-(1-carboxyvinyl)-3-phosphoshikimate + phosphate. It functions in the pathway metabolic intermediate biosynthesis; chorismate biosynthesis; chorismate from D-erythrose 4-phosphate and phosphoenolpyruvate: step 6/7. Its function is as follows. Catalyzes the transfer of the enolpyruvyl moiety of phosphoenolpyruvate (PEP) to the 5-hydroxyl of shikimate-3-phosphate (S3P) to produce enolpyruvyl shikimate-3-phosphate and inorganic phosphate. The chain is 3-phosphoshikimate 1-carboxyvinyltransferase from Methylorubrum extorquens (strain CM4 / NCIMB 13688) (Methylobacterium extorquens).